A 338-amino-acid polypeptide reads, in one-letter code: Ketol-acid reductoisomerase (NADP(+)) (338 aa).

Residues 3 to 183 form the KARI N-terminal Rossmann domain; the sequence is IDVFYDDDAD…GGARAGVIPT (181 aa). Residues 26–29, Arg49, Ser52, Ser54, and 84–87 contribute to the NADP(+) site; these read YGSQ and DTSQ. His109 is an active-site residue. Residue Gly135 participates in NADP(+) binding. Residues 184 to 329 form the KARI C-terminal knotted domain; it reads TFEAETVTDL…AKLRDLMSWV (146 aa). 4 residues coordinate Mg(2+): Asp192, Glu196, Glu228, and Glu232. Ser253 lines the substrate pocket.

It belongs to the ketol-acid reductoisomerase family. Mg(2+) serves as cofactor.

The enzyme catalyses (2R)-2,3-dihydroxy-3-methylbutanoate + NADP(+) = (2S)-2-acetolactate + NADPH + H(+). It carries out the reaction (2R,3R)-2,3-dihydroxy-3-methylpentanoate + NADP(+) = (S)-2-ethyl-2-hydroxy-3-oxobutanoate + NADPH + H(+). It participates in amino-acid biosynthesis; L-isoleucine biosynthesis; L-isoleucine from 2-oxobutanoate: step 2/4. The protein operates within amino-acid biosynthesis; L-valine biosynthesis; L-valine from pyruvate: step 2/4. Involved in the biosynthesis of branched-chain amino acids (BCAA). Catalyzes an alkyl-migration followed by a ketol-acid reduction of (S)-2-acetolactate (S2AL) to yield (R)-2,3-dihydroxy-isovalerate. In the isomerase reaction, S2AL is rearranged via a Mg-dependent methyl migration to produce 3-hydroxy-3-methyl-2-ketobutyrate (HMKB). In the reductase reaction, this 2-ketoacid undergoes a metal-dependent reduction by NADPH to yield (R)-2,3-dihydroxy-isovalerate. The polypeptide is Ketol-acid reductoisomerase (NADP(+)) (Corynebacterium jeikeium (strain K411)).